Here is a 345-residue protein sequence, read N- to C-terminus: Krueppel-like factor 3 (345 aa).

The segment at 1–74 (MLMFDPVPVK…TVNKRSSPPS (74 aa)) is repressor domain. A Glycyl lysine isopeptide (Lys-Gly) (interchain with G-Cter in SUMO) cross-link involves residue Lys-10. Positions 60–68 (EPVDLTVNK) match the 9aaTAD; inactive motif. The CTBP-binding motif signature appears at 61 to 65 (PVDLT). A disordered region spans residues 66 to 112 (VNKRSSPPSAGNSPSSLKFPSSHRRASPGLSMPSSSPPIKKYSPPSP). Lys-68 participates in a covalent cross-link: Glycyl lysine isopeptide (Lys-Gly) (interchain with G-Cter in SUMO2). Composition is skewed to low complexity over residues 70–81 (SSPPSAGNSPSS) and 92–108 (SPGL…KKYS). Residues Ser-71, Ser-92, Ser-101, Ser-108, and Ser-111 each carry the phosphoserine modification. Residues Lys-196 and Lys-198 each participate in a glycyl lysine isopeptide (Lys-Gly) (interchain with G-Cter in SUMO2) cross-link. Phosphoserine is present on residues Ser-216, Ser-224, and Ser-250. C2H2-type zinc fingers lie at residues 260 to 284 (HRCD…RRTH), 290 to 314 (YKCT…FRKH), and 320 to 342 (FQCP…RKRH).

It belongs to the krueppel C2H2-type zinc-finger protein family. As to quaternary structure, monomer. Sumoylated with SUMO1. Sumoylation is enhanced by PIAS1, PIAS2alpha and PIAS2beta, and PIAS4, but not by Pc2. Enhances transcriptional repression, but has no effect on DNA binding. Sumoylation on Lys-198 is the major site.

It is found in the nucleus. In terms of biological role, binds to the CACCC box of erythroid cell-expressed genes. May play a role in hematopoiesis. This chain is Krueppel-like factor 3 (KLF3), found in Homo sapiens (Human).